A 386-amino-acid polypeptide reads, in one-letter code: Succinate--CoA ligase [ADP-forming] subunit beta (386 aa).

In terms of domain architecture, ATP-grasp spans 9 to 244 (KDLLTSYQLP…PSQENIRDVL (236 aa)). Residues lysine 46, 53–55 (GRG), valine 102, and glutamate 107 each bind ATP. Mg(2+) is bound by residues asparagine 199 and aspartate 213. Substrate contacts are provided by residues asparagine 264 and 321-323 (GIM).

It belongs to the succinate/malate CoA ligase beta subunit family. As to quaternary structure, heterotetramer of two alpha and two beta subunits. Mg(2+) serves as cofactor.

It carries out the reaction succinate + ATP + CoA = succinyl-CoA + ADP + phosphate. The catalysed reaction is GTP + succinate + CoA = succinyl-CoA + GDP + phosphate. It participates in carbohydrate metabolism; tricarboxylic acid cycle; succinate from succinyl-CoA (ligase route): step 1/1. Succinyl-CoA synthetase functions in the citric acid cycle (TCA), coupling the hydrolysis of succinyl-CoA to the synthesis of either ATP or GTP and thus represents the only step of substrate-level phosphorylation in the TCA. The beta subunit provides nucleotide specificity of the enzyme and binds the substrate succinate, while the binding sites for coenzyme A and phosphate are found in the alpha subunit. The polypeptide is Succinate--CoA ligase [ADP-forming] subunit beta (Chlamydia muridarum (strain MoPn / Nigg)).